Reading from the N-terminus, the 226-residue chain is EEF1A lysine methyltransferase 3 (226 aa).

S-adenosyl-L-methionine-binding positions include Trp57, 83 to 85 (GAG), Asp104, Trp133, and Ala150.

Belongs to the methyltransferase superfamily. METTL21 family. Interacts with members of the heat shock protein 70 and 90 families and of the TCP-1 chaperonin family, as well as with HSPD1, STIP1 and tubulin; at least some of these proteins may be methylation substrates.

It is found in the cytoplasm. It localises to the cytoskeleton. The protein resides in the microtubule organizing center. The protein localises to the centrosome. The enzyme catalyses L-lysyl-[protein] + 3 S-adenosyl-L-methionine = N(6),N(6),N(6)-trimethyl-L-lysyl-[protein] + 3 S-adenosyl-L-homocysteine + 3 H(+). The catalysed reaction is L-lysyl-[protein] + S-adenosyl-L-methionine = N(6)-methyl-L-lysyl-[protein] + S-adenosyl-L-homocysteine + H(+). It carries out the reaction N(6)-methyl-L-lysyl-[protein] + S-adenosyl-L-methionine = N(6),N(6)-dimethyl-L-lysyl-[protein] + S-adenosyl-L-homocysteine + H(+). It catalyses the reaction N(6),N(6)-dimethyl-L-lysyl-[protein] + S-adenosyl-L-methionine = N(6),N(6),N(6)-trimethyl-L-lysyl-[protein] + S-adenosyl-L-homocysteine + H(+). Protein-lysine methyltransferase that selectively mono-, di- and trimethylates 'Lys-165' of the translation elongation factors EEF1A1 and EEF1A2 in an aminoacyl-tRNA and GTP-dependent manner. EEF1A1 methylation by EEF1AKMT3 is dynamic as well as inducible by stress conditions, such as ER-stress, and plays a regulatory role on mRNA translation. In Bos taurus (Bovine), this protein is EEF1A lysine methyltransferase 3.